The following is a 180-amino-acid chain: Large ribosomal subunit protein uL5 (180 aa).

Belongs to the universal ribosomal protein uL5 family. In terms of assembly, part of the 50S ribosomal subunit; part of the 5S rRNA/L5/L18/L25 subcomplex. Contacts the 5S rRNA and the P site tRNA. Forms a bridge to the 30S subunit in the 70S ribosome.

This is one of the proteins that bind and probably mediate the attachment of the 5S RNA into the large ribosomal subunit, where it forms part of the central protuberance. In the 70S ribosome it contacts protein S13 of the 30S subunit (bridge B1b), connecting the 2 subunits; this bridge is implicated in subunit movement. Contacts the P site tRNA; the 5S rRNA and some of its associated proteins might help stabilize positioning of ribosome-bound tRNAs. The chain is Large ribosomal subunit protein uL5 from Polynucleobacter asymbioticus (strain DSM 18221 / CIP 109841 / QLW-P1DMWA-1) (Polynucleobacter necessarius subsp. asymbioticus).